The sequence spans 302 residues: 4-hydroxy-tetrahydrodipicolinate synthase (302 aa).

Position 55 (threonine 55) interacts with pyruvate. The Proton donor/acceptor role is filled by tyrosine 144. Lysine 172 serves as the catalytic Schiff-base intermediate with substrate. Pyruvate is bound at residue valine 214.

Belongs to the DapA family. As to quaternary structure, homotetramer; dimer of dimers.

The protein localises to the cytoplasm. It catalyses the reaction L-aspartate 4-semialdehyde + pyruvate = (2S,4S)-4-hydroxy-2,3,4,5-tetrahydrodipicolinate + H2O + H(+). It functions in the pathway amino-acid biosynthesis; L-lysine biosynthesis via DAP pathway; (S)-tetrahydrodipicolinate from L-aspartate: step 3/4. Catalyzes the condensation of (S)-aspartate-beta-semialdehyde [(S)-ASA] and pyruvate to 4-hydroxy-tetrahydrodipicolinate (HTPA). This is 4-hydroxy-tetrahydrodipicolinate synthase from Synechococcus sp. (strain WH7803).